The sequence spans 304 residues: Recombination-associated protein RdgC (304 aa).

It belongs to the RdgC family.

The protein resides in the cytoplasm. It localises to the nucleoid. Its function is as follows. May be involved in recombination. The sequence is that of Recombination-associated protein RdgC from Shewanella baltica (strain OS195).